Here is an 89-residue protein sequence, read N- to C-terminus: Small ribosomal subunit protein uS15 (89 aa).

A disordered region spans residues 1 to 24 (MSLDTTEKQQLINSHQTHATDTGS). The span at 8–24 (KQQLINSHQTHATDTGS) shows a compositional bias: polar residues.

It belongs to the universal ribosomal protein uS15 family. Part of the 30S ribosomal subunit. Forms a bridge to the 50S subunit in the 70S ribosome, contacting the 23S rRNA.

Functionally, one of the primary rRNA binding proteins, it binds directly to 16S rRNA where it helps nucleate assembly of the platform of the 30S subunit by binding and bridging several RNA helices of the 16S rRNA. Forms an intersubunit bridge (bridge B4) with the 23S rRNA of the 50S subunit in the ribosome. This is Small ribosomal subunit protein uS15 from Synechococcus sp. (strain CC9311).